Consider the following 97-residue polypeptide: MSRKCELTGVGVLYGNNVSHSQRKTRRRFEPNLRSVKFTSDITAGEYRLSVNARCISSVEKAGGFDAYILKADDNVLSSNARTIKKKIIQTKTAKSL.

The protein belongs to the bacterial ribosomal protein bL28 family.

This is Large ribosomal subunit protein bL28 from Rickettsia felis (strain ATCC VR-1525 / URRWXCal2) (Rickettsia azadi).